A 522-amino-acid polypeptide reads, in one-letter code: Maturase K (522 aa).

This sequence belongs to the intron maturase 2 family. MatK subfamily.

Its subcellular location is the plastid. It is found in the chloroplast. In terms of biological role, usually encoded in the trnK tRNA gene intron. Probably assists in splicing its own and other chloroplast group II introns. This chain is Maturase K, found in Pillansia templemannii.